A 264-amino-acid polypeptide reads, in one-letter code: Tritrans,polycis-undecaprenyl-diphosphate synthase (geranylgeranyl-diphosphate specific) (264 aa).

D43 is a catalytic residue. Residue D43 coordinates Mg(2+). Substrate is bound by residues 44–47, W48, H60, and 88–90; these read GNRR and STE. Residue N91 is the Proton acceptor of the active site. Residues F92, R94, R213, and 219 to 221 contribute to the substrate site; that span reads RIS. E232 serves as a coordination point for Mg(2+).

The protein belongs to the UPP synthase family. In terms of assembly, homodimer. Mg(2+) serves as cofactor.

The catalysed reaction is geranylgeranyl diphosphate + 7 isopentenyl diphosphate = tri-trans,hepta-cis-undecaprenyl diphosphate + 7 diphosphate. Catalyzes the sequential condensation of isopentenyl diphosphate (IPP) with geranylgeranyl diphosphate (GGPP) to yield (2Z,6Z,10Z,14Z,18Z,22Z,26Z,30E,34E,38E)-undecaprenyl diphosphate (tritrans,heptacis-UPP). It is probably the precursor of glycosyl carrier lipids. The sequence is that of Tritrans,polycis-undecaprenyl-diphosphate synthase (geranylgeranyl-diphosphate specific) from Pyrococcus horikoshii (strain ATCC 700860 / DSM 12428 / JCM 9974 / NBRC 100139 / OT-3).